Consider the following 770-residue polypeptide: Cullin-1 (770 aa).

Residues 700 to 761 enclose the Cullin neddylation domain; sequence DRKLQIQAAI…EKEYLMRVEG (62 aa). Residue Lys714 forms a Glycyl lysine isopeptide (Lys-Gly) (interchain with G-Cter in NEDD8) linkage.

Belongs to the cullin family. As to quaternary structure, part of a complex that includes culA, fbxA and regA. Formation of this complex is dependent on the MAP kinase erkB. Neddylated; which enhances the ubiquitination activity of SCF.

Its pathway is protein modification; protein ubiquitination. Probable core component of cullin-based SCF-like E3 ubiquitin-protein ligase complexes which mediate the ubiquitination and subsequent proteasomal degradation of target proteins. The E3 ubiquitin-protein ligase activity of the complex is dependent on the neddylation of the cullin subunit. Required at several stages during development. CulA and fbxA regulate multicellular development by targeting regA for degradation via a pathway that requires erkB function, leading to an increase in cAMP and PKA activity. The protein is Cullin-1 (culA) of Dictyostelium discoideum (Social amoeba).